A 302-amino-acid polypeptide reads, in one-letter code: 4-hydroxy-tetrahydrodipicolinate synthase (302 aa).

Thr49 contacts pyruvate. The active-site Proton donor/acceptor is Tyr137. The Schiff-base intermediate with substrate role is filled by Lys166. Ile208 contributes to the pyruvate binding site.

It belongs to the DapA family. Homotetramer; dimer of dimers.

Its subcellular location is the cytoplasm. It carries out the reaction L-aspartate 4-semialdehyde + pyruvate = (2S,4S)-4-hydroxy-2,3,4,5-tetrahydrodipicolinate + H2O + H(+). The protein operates within amino-acid biosynthesis; L-lysine biosynthesis via DAP pathway; (S)-tetrahydrodipicolinate from L-aspartate: step 3/4. Its function is as follows. Catalyzes the condensation of (S)-aspartate-beta-semialdehyde [(S)-ASA] and pyruvate to 4-hydroxy-tetrahydrodipicolinate (HTPA). The protein is 4-hydroxy-tetrahydrodipicolinate synthase of Chloroherpeton thalassium (strain ATCC 35110 / GB-78).